Reading from the N-terminus, the 102-residue chain is Citrate lyase acyl carrier protein (102 aa).

An O-(phosphoribosyl dephospho-coenzyme A)serine modification is found at Ser14.

The protein belongs to the CitD family. In terms of assembly, oligomer with a subunit composition of (alpha,beta,gamma)6.

It localises to the cytoplasm. Covalent carrier of the coenzyme of citrate lyase. This Streptococcus equi subsp. zooepidemicus (strain H70) protein is Citrate lyase acyl carrier protein.